Reading from the N-terminus, the 159-residue chain is Large ribosomal subunit protein uL11 (159 aa).

A compositionally biased stretch (basic and acidic residues) spans 137 to 149 (EGKDPREVQREVD). The interval 137-159 (EGKDPREVQREVDSGAWDKLLGG) is disordered.

Belongs to the universal ribosomal protein uL11 family. As to quaternary structure, part of the ribosomal stalk of the 50S ribosomal subunit. Interacts with L10 and the large rRNA to form the base of the stalk. L10 forms an elongated spine to which L12 dimers bind in a sequential fashion forming a multimeric L10(L12)X complex.

Functionally, forms part of the ribosomal stalk which helps the ribosome interact with GTP-bound translation factors. The chain is Large ribosomal subunit protein uL11 from Korarchaeum cryptofilum (strain OPF8).